Reading from the N-terminus, the 1093-residue chain is Protein transport protein Sec24A (1093 aa).

4 disordered regions span residues 1–29, 60–168, 189–226, and 294–328; these read MSQP…SGSP, HPIP…TSLT, GPSV…ALTP, and SLPP…TQTP. Polar residues-rich tracts occupy residues 112-126 and 138-168; these read ASQN…SSSF and WQYN…TSLT. 2 stretches are compositionally biased toward pro residues: residues 191–201 and 209–221; these read SVPPLVNPPLP and PHGP…PPPV. Residues 299-328 show a composition bias toward polar residues; it reads YQNTTPPGATGVPPSSLNYPSGPQAFTQTP. Zn(2+) contacts are provided by cysteine 431, cysteine 434, cysteine 452, and cysteine 455. A zinc finger-like region spans residues 431 to 455; it reads CRSCRTYINPFVSFLDQRRWKCNLC. The stretch at 966-1038 is one Gelsolin-like repeat; sequence PQPPILQLSV…TPESARIIAF (73 aa).

The protein belongs to the SEC23/SEC24 family. SEC24 subfamily. In terms of assembly, COPII is composed of at least five proteins: the Sec23/24 complex, the Sec13/31 complex and Sar1. Interacts with TMED2. Interacts (as part of the Sec23/24 complex) with SEC22B; recruits SEC22B into COPII-coated vesicles for its transport from the endoplasmic reticulum to the Golgi. Interacts with STING1; promoting STING1 translocation to COPII vesicles in a STEEP1-dependent manner. Interacts with TMEM39A. Interacts with SACM1L; this interaction is reduced in the absence of TMEM39A. Interacts with kinase FAM20C; transport of FAM20C from the endoplasmic reticulum to the Golgi is likely to be mediated by COPII vesicles.

It is found in the cytoplasmic vesicle. The protein resides in the COPII-coated vesicle membrane. The protein localises to the endoplasmic reticulum membrane. Its subcellular location is the cytoplasm. It localises to the cytosol. Component of the coat protein complex II (COPII) which promotes the formation of transport vesicles from the endoplasmic reticulum (ER). The coat has two main functions, the physical deformation of the endoplasmic reticulum membrane into vesicles and the selection of cargo molecules for their transport to the Golgi complex. Plays a central role in cargo selection within the COPII complex and together with SEC24B may have a different specificity compared to SEC24C and SEC24D. May package preferentially cargos with cytoplasmic DxE or LxxLE motifs and may also recognize conformational epitopes. The sequence is that of Protein transport protein Sec24A from Homo sapiens (Human).